The chain runs to 584 residues: Sperm-associated microtubule inner protein 4 (584 aa).

The protein resides in the cytoplasm. The protein localises to the cytoskeleton. Its subcellular location is the microtubule organizing center. It is found in the centrosome. It localises to the flagellum axoneme. Functionally, microtubule inner protein (MIP) part of the dynein-decorated doublet microtubules (DMTs) in flagellum axoneme. May serve to reinforce and thus stabilize the microtubule structure in the sperm flagella. This Bos taurus (Bovine) protein is Sperm-associated microtubule inner protein 4 (SPMIP4).